The following is a 284-amino-acid chain: 4-diphosphocytidyl-2-C-methyl-D-erythritol kinase (284 aa).

K14 is an active-site residue. An ATP-binding site is contributed by P98 to S108. D140 is an active-site residue.

The protein belongs to the GHMP kinase family. IspE subfamily.

It catalyses the reaction 4-CDP-2-C-methyl-D-erythritol + ATP = 4-CDP-2-C-methyl-D-erythritol 2-phosphate + ADP + H(+). It participates in isoprenoid biosynthesis; isopentenyl diphosphate biosynthesis via DXP pathway; isopentenyl diphosphate from 1-deoxy-D-xylulose 5-phosphate: step 3/6. Catalyzes the phosphorylation of the position 2 hydroxy group of 4-diphosphocytidyl-2C-methyl-D-erythritol. The sequence is that of 4-diphosphocytidyl-2-C-methyl-D-erythritol kinase from Shewanella denitrificans (strain OS217 / ATCC BAA-1090 / DSM 15013).